The sequence spans 241 residues: Queuine tRNA-ribosyltransferase-like protein (241 aa).

Belongs to the queuine tRNA-ribosyltransferase family.

In Plasmodium falciparum, this protein is Queuine tRNA-ribosyltransferase-like protein.